A 493-amino-acid polypeptide reads, in one-letter code: Cardiolipin synthase 1 (493 aa).

Helical transmembrane passes span 13–33 (FTII…IIIF) and 45–65 (WAWL…YLFF). PLD phosphodiesterase domains are found at residues 228–255 (MNNR…GDEY) and 406–433 (ENGF…DFRS). Catalysis depends on residues His-233, Lys-235, Asp-240, His-411, Lys-413, and Asp-418.

It belongs to the phospholipase D family. Cardiolipin synthase subfamily.

Its subcellular location is the cell membrane. The catalysed reaction is 2 a 1,2-diacyl-sn-glycero-3-phospho-(1'-sn-glycerol) = a cardiolipin + glycerol. Functionally, catalyzes the reversible phosphatidyl group transfer from one phosphatidylglycerol molecule to another to form cardiolipin (CL) (diphosphatidylglycerol) and glycerol. The protein is Cardiolipin synthase 1 (cls1) of Staphylococcus aureus (strain COL).